Here is a 259-residue protein sequence, read N- to C-terminus: ATP synthase subunit a 1 (259 aa).

5 helical membrane passes run 30-50, 90-110, 135-155, 209-229, and 230-250; these read TLHVDTLFFSVFLGAVFLFFF, LIAPLALSIFAWVFLMNAMDL, DLNATFGMSISVFFLIIFYSL, LIFILIALLPWWVQPALSFPW, and AVFHILIITLQAFIFMVLTIV.

It belongs to the ATPase A chain family. In terms of assembly, F-type ATPases have 2 components, CF(1) - the catalytic core - and CF(0) - the membrane proton channel. CF(1) has five subunits: alpha(3), beta(3), gamma(1), delta(1), epsilon(1). CF(0) has three main subunits: a(1), b(2) and c(9-12). The alpha and beta chains form an alternating ring which encloses part of the gamma chain. CF(1) is attached to CF(0) by a central stalk formed by the gamma and epsilon chains, while a peripheral stalk is formed by the delta and b chains.

The protein resides in the cell inner membrane. Its function is as follows. Key component of the proton channel; it plays a direct role in the translocation of protons across the membrane. The protein is ATP synthase subunit a 1 of Methylococcus capsulatus (strain ATCC 33009 / NCIMB 11132 / Bath).